A 69-amino-acid chain; its full sequence is Cecropin-like peptide 1 (69 aa).

Positions 1 to 23 (MNFTKLFVVFAVVLVAFAGQSEA) are cleaved as a signal peptide. Residue glutamine 68 is modified to Glutamine amide.

In terms of tissue distribution, following bacterial infection, expressed in fat body, trachea and muscle.

The protein resides in the secreted. Its function is as follows. Antimicrobial peptide active against Gram-negative bacteria E.coli KCCM 11234 (MIC&lt;=1.03 uM), E.aerogenes KCCM 12177 (MIC&lt;=2.07 uM) and P.aeruginosa KCCM 11328 (MIC&lt;=2.07 uM). Not active against various Gram-positive bacteria at concentrations up to 4.14 uM. The protein is Cecropin-like peptide 1 of Hermetia illucens (Black soldier fly).